The sequence spans 167 residues: Cell division protein SepF (167 aa).

Residues 25-64 form a disordered region; it reads EEDVAPVNNSTFQEKKHKKRSAVQRKQKNSDQEGDSVVPL. The span at 39 to 51 shows a compositional bias: basic residues; it reads KKHKKRSAVQRKQ.

This sequence belongs to the SepF family. In terms of assembly, homodimer. Interacts with FtsZ.

The protein resides in the cytoplasm. Its function is as follows. Cell division protein that is part of the divisome complex and is recruited early to the Z-ring. Probably stimulates Z-ring formation, perhaps through the cross-linking of FtsZ protofilaments. Its function overlaps with FtsA. The protein is Cell division protein SepF of Natranaerobius thermophilus (strain ATCC BAA-1301 / DSM 18059 / JW/NM-WN-LF).